We begin with the raw amino-acid sequence, 144 residues long: Ribonuclease H (144 aa).

The RNase H type-1 domain maps to 1-141 (MDKIDIYSDG…ADALANRGVE (141 aa)). Residues Asp-9, Glu-47, Asp-69, and Asp-133 each contribute to the Mg(2+) site.

The protein belongs to the RNase H family. As to quaternary structure, monomer. Mg(2+) is required as a cofactor.

The protein resides in the cytoplasm. The catalysed reaction is Endonucleolytic cleavage to 5'-phosphomonoester.. Endonuclease that specifically degrades the RNA of RNA-DNA hybrids. The sequence is that of Ribonuclease H from Janthinobacterium sp. (strain Marseille) (Minibacterium massiliensis).